We begin with the raw amino-acid sequence, 117 residues long: MHILDSFDKKTLRDDIPEFAPGDTVKVHVNIIEGKTARVQVFQGYVMGRQGYGVRETFRVRKVSFGIGVERVFPVHSPIIDKIEVVTKGDVRRAKLYYMRDRHGKAARIREKRADAK.

The protein belongs to the bacterial ribosomal protein bL19 family.

Its function is as follows. This protein is located at the 30S-50S ribosomal subunit interface and may play a role in the structure and function of the aminoacyl-tRNA binding site. The protein is Large ribosomal subunit protein bL19 of Micrococcus luteus (strain ATCC 4698 / DSM 20030 / JCM 1464 / CCM 169 / CCUG 5858 / IAM 1056 / NBRC 3333 / NCIMB 9278 / NCTC 2665 / VKM Ac-2230) (Micrococcus lysodeikticus).